Reading from the N-terminus, the 108-residue chain is V-type proton ATPase subunit G (108 aa).

Residues 48-60 are compositionally biased toward basic and acidic residues; the sequence is YASKKEEEFKKSE. A disordered region spans residues 48–89; it reads YASKKEEEFKKSESQASGIYSQAEAESKKQVQDTFASIETSS. Residues 79 to 89 are compositionally biased toward polar residues; it reads QDTFASIETSS.

Belongs to the V-ATPase G subunit family. In terms of assembly, V-ATPase is a heteromultimeric enzyme composed of a peripheral catalytic V1 complex (components A to H) attached to an integral membrane V0 proton pore complex (components: a, c, c', c'', d, e, f and VOA1).

The protein localises to the vacuole membrane. Subunit of the V1 complex of vacuolar(H+)-ATPase (V-ATPase), a multisubunit enzyme composed of a peripheral complex (V1) that hydrolyzes ATP and a membrane integral complex (V0) that translocates protons. V-ATPase is responsible for acidifying and maintaining the pH of intracellular compartments. This is V-type proton ATPase subunit G (vma10) from Schizosaccharomyces pombe (strain 972 / ATCC 24843) (Fission yeast).